Here is a 433-residue protein sequence, read N- to C-terminus: Putative ankyrin repeat protein R784 (433 aa).

ANK repeat units lie at residues 44–70, 71–101, 102–131, 179–205, 206–235, 237–264, 265–294, 296–321, 322–351, and 380–409; these read NQNL…KTDV, NGLK…NNDL, LDLH…IVII, FYDS…NQCS, VRQK…RIFS, RRLI…IDLA, QNNF…DIHF, NGEC…NKVY, MSEK…ACMS, and NMRK…KLRE.

The protein is Putative ankyrin repeat protein R784 of Acanthamoeba polyphaga mimivirus (APMV).